Here is a 255-residue protein sequence, read N- to C-terminus: Myb-related protein Zm38 (255 aa).

2 HTH myb-type domains span residues 9–61 (KAHT…INYL) and 62–116 (RPDL…RRKL). 2 DNA-binding regions (H-T-H motif) span residues 37 to 61 (WRSL…INYL) and 89 to 112 (WSLI…NTHV).

It is found in the nucleus. In terms of biological role, transcription factor that negatively regulates genes involved in anthocyanin biosynthesis. This chain is Myb-related protein Zm38, found in Zea mays (Maize).